We begin with the raw amino-acid sequence, 89 residues long: MALVQEKKQELVQKYKRHEKDTGSPEVQVALLSERIAYLTEHFKTHKKDHHSRRGLLKLVGQRRRLLDYLRTIDQGRYKTLIDQLGIRK.

This sequence belongs to the universal ribosomal protein uS15 family. Part of the 30S ribosomal subunit. Forms a bridge to the 50S subunit in the 70S ribosome, contacting the 23S rRNA.

Its function is as follows. One of the primary rRNA binding proteins, it binds directly to 16S rRNA where it helps nucleate assembly of the platform of the 30S subunit by binding and bridging several RNA helices of the 16S rRNA. Forms an intersubunit bridge (bridge B4) with the 23S rRNA of the 50S subunit in the ribosome. The polypeptide is Small ribosomal subunit protein uS15 (Anaeromyxobacter dehalogenans (strain 2CP-1 / ATCC BAA-258)).